A 386-amino-acid polypeptide reads, in one-letter code: MNNHHQQLNPQFDPTSHDDFLEQMLSTLPSFWDPNSDLSAETTPDNVAAFPFDEHSTLNSKFRNHQITSPTTKAAAALMLQQHLLQMPANDVVDPTNFFKSPNPGGEASASVQALYNGFTGSLNGTQPQQHFQHPPQGNSNQIQGQNFGATNQAPPASGSAGGGGNQGQAKPRVRARRGQATDPHSIAERLRRERIAERMKALQELVPNANKTDKASMLDEIIDYVKFLQLQVKVLSMSRLGGAAAVAPLVADISSEGGGGGGGGDCVTNGAGGVLPRSTTTAASTTNDSLTMTEHQVAKLMEEDMGSAMQYLQGKGLCLMPISLATAISTATCHTRSPLIPNNLANLAAAAASNGEGPSSPNMSVLTVQSAVAGNDSTVKDVSKP.

Positions 119-186 (FTGSLNGTQP…RRGQATDPHS (68 aa)) are disordered. Low complexity predominate over residues 127–137 (QPQQHFQHPPQ). Polar residues predominate over residues 138–151 (GNSNQIQGQNFGAT). The segment at 180-193 (QATDPHSIAERLRR) is basic motif; degenerate. A bHLH domain is found at 180–229 (QATDPHSIAERLRRERIAERMKALQELVPNANKTDKASMLDEIIDYVKFL). Residues 194–229 (ERIAERMKALQELVPNANKTDKASMLDEIIDYVKFL) form a helix-loop-helix motif region.

Expressed in root epidermal cells.

The protein resides in the nucleus. Its function is as follows. Transcription factor that regulates the development of root hairs. In Lotus japonicus (Lotus corniculatus var. japonicus), this protein is bHLH transcription factor RHL1.